A 119-amino-acid polypeptide reads, in one-letter code: Insulin growth factor-like family member 2 (119 aa).

An N-terminal signal peptide occupies residues 1–25 (MVPRIFAPAYVSVCLLLLCPREVIA).

Belongs to the IGFL family. As to expression, detected in cerebellum, heart, placenta, spleen, stomach, testis and thymus.

It localises to the secreted. Functionally, potential ligand of the IGFLR1 cell membrane receptor. This Homo sapiens (Human) protein is Insulin growth factor-like family member 2 (IGFL2).